The following is a 271-amino-acid chain: Cytosolic Fe-S cluster assembly factor NUBP2 (271 aa).

Residue Met1 is modified to N-acetylmethionine. 22 to 29 (GKGGVGKS) contributes to the ATP binding site. [4Fe-4S] cluster contacts are provided by Cys196 and Cys199.

It belongs to the Mrp/NBP35 ATP-binding proteins family. NUBP2/CFD1 subfamily. In terms of assembly, heterotetramer of 2 NUBP1 and 2 NUBP2 chains. Interacts with KIFC1. Interacts with NUBP1. Requires [4Fe-4S] cluster as cofactor. In terms of tissue distribution, widely expressed with highest expression in skeletal muscle.

It localises to the nucleus. It is found in the cytoplasm. Its subcellular location is the cytoskeleton. The protein resides in the microtubule organizing center. The protein localises to the centrosome. It localises to the cilium axoneme. It is found in the centriole. Component of the cytosolic iron-sulfur (Fe/S) protein assembly (CIA) machinery. Required for maturation of extramitochondrial Fe-S proteins. The NUBP1-NUBP2 heterotetramer forms a Fe-S scaffold complex, mediating the de novo assembly of an Fe-S cluster and its transfer to target apoproteins. Negatively regulates cilium formation and structure. This chain is Cytosolic Fe-S cluster assembly factor NUBP2, found in Homo sapiens (Human).